A 646-amino-acid polypeptide reads, in one-letter code: ATP-dependent rRNA helicase SPB4 (646 aa).

The Q motif motif lies at 15-43; the sequence is WGALTPSLAPWILDYLSSMGFEQPTPVQK. In terms of domain architecture, Helicase ATP-binding spans 46–247; that stretch reads FDIFRGNKDV…TVGLLYPHKI (202 aa). 59-66 serves as a coordination point for ATP; it reads AVTGSGKT. The short motif at 195 to 198 is the DEAD box element; the sequence is DEAD. In terms of domain architecture, Helicase C-terminal spans 284–434; that stretch reads ALCQLLERLE…PLAKPPVSVT (151 aa). Composition is skewed to basic and acidic residues over residues 539 to 548 and 566 to 581; these read KKEKAAREAQ and NEAWSGKHEHEDVKAA. Residues 539–646 form a disordered region; it reads KKEKAAREAQ…GGDEFEGFDD (108 aa). A coiled-coil region spans residues 572-623; the sequence is KHEHEDVKAARREKKRRKREAQRLGDMTEPEREEQRKLDEMIAEVRRRNAEA. Residues 582–591 show a composition bias toward basic residues; it reads RREKKRRKRE. Over residues 600-621 the composition is skewed to basic and acidic residues; it reads EPEREEQRKLDEMIAEVRRRNA. Residues 622-631 show a composition bias toward low complexity; that stretch reads EAPTPAAQAA.

It belongs to the DEAD box helicase family. DDX55/SPB4 subfamily. In terms of assembly, component of pre-60S ribosomal complexes.

Its subcellular location is the nucleus. It is found in the nucleolus. It catalyses the reaction ATP + H2O = ADP + phosphate + H(+). ATP-binding RNA helicase involved in the biogenesis of 60S ribosomal subunits. Binds 90S pre-ribosomal particles and dissociates from pre-60S ribosomal particles after processing of 27SB pre-rRNA. Required for the normal formation of 18S rRNA through the processing of pre-rRNAs at sites A0, A1 and A2, and the normal formation of 25S and 5.8S rRNAs through the processing of pre-rRNAs at sites C1 and C2. The sequence is that of ATP-dependent rRNA helicase SPB4 from Chaetomium globosum (strain ATCC 6205 / CBS 148.51 / DSM 1962 / NBRC 6347 / NRRL 1970) (Soil fungus).